The following is a 57-amino-acid chain: UPF0391 membrane protein IL0696 (57 aa).

The next 2 helical transmembrane spans lie at 4–24 and 28–48; these read WVLIFLAVAVVAAILGFGGIA and AGIAKIIFYIFIILFAISLVV.

The protein belongs to the UPF0391 family.

The protein resides in the cell membrane. This Idiomarina loihiensis (strain ATCC BAA-735 / DSM 15497 / L2-TR) protein is UPF0391 membrane protein IL0696.